The following is a 242-amino-acid chain: Uridylate kinase (242 aa).

Residue 16–19 (KVSG) participates in ATP binding. Position 58 (Gly-58) interacts with UMP. Residues Gly-59 and Arg-63 each contribute to the ATP site. Residues Asp-78 and 139-146 (TGNPFCTT) contribute to the UMP site. Residues Thr-166, Gln-167, Tyr-172, and Asp-175 each contribute to the ATP site.

Belongs to the UMP kinase family. In terms of assembly, homohexamer.

It localises to the cytoplasm. It carries out the reaction UMP + ATP = UDP + ADP. Its pathway is pyrimidine metabolism; CTP biosynthesis via de novo pathway; UDP from UMP (UMPK route): step 1/1. Inhibited by UTP. Functionally, catalyzes the reversible phosphorylation of UMP to UDP. In Rickettsia felis (strain ATCC VR-1525 / URRWXCal2) (Rickettsia azadi), this protein is Uridylate kinase.